We begin with the raw amino-acid sequence, 302 residues long: Dermonecrotic toxin LiSicTox-alphaIA1bii (302 aa).

Positions 1–14 are cleaved as a signal peptide; sequence ARVVLGCWSVLSQA. A propeptide spanning residues 15-22 is cleaved from the precursor; that stretch reads AQTDDEER. His34 is an active-site residue. Mg(2+)-binding residues include Glu54 and Asp56. His70 (nucleophile) is an active-site residue. 2 disulfides stabilise this stretch: Cys74–Cys80 and Cys76–Cys219. Position 114 (Asp114) interacts with Mg(2+).

It belongs to the arthropod phospholipase D family. Class II subfamily. Class IIa sub-subfamily. It depends on Mg(2+) as a cofactor. Expressed by the venom gland.

Its subcellular location is the secreted. It catalyses the reaction an N-(acyl)-sphingosylphosphocholine = an N-(acyl)-sphingosyl-1,3-cyclic phosphate + choline. The catalysed reaction is an N-(acyl)-sphingosylphosphoethanolamine = an N-(acyl)-sphingosyl-1,3-cyclic phosphate + ethanolamine. The enzyme catalyses a 1-acyl-sn-glycero-3-phosphocholine = a 1-acyl-sn-glycero-2,3-cyclic phosphate + choline. It carries out the reaction a 1-acyl-sn-glycero-3-phosphoethanolamine = a 1-acyl-sn-glycero-2,3-cyclic phosphate + ethanolamine. Its function is as follows. Dermonecrotic toxins cleave the phosphodiester linkage between the phosphate and headgroup of certain phospholipids (sphingolipid and lysolipid substrates), forming an alcohol (often choline) and a cyclic phosphate. This toxin acts on sphingomyelin (SM). It may also act on ceramide phosphoethanolamine (CPE), lysophosphatidylcholine (LPC) and lysophosphatidylethanolamine (LPE), but not on lysophosphatidylserine (LPS), and lysophosphatidylglycerol (LPG). It acts by transphosphatidylation, releasing exclusively cyclic phosphate products as second products. Induces hemolysis, dermonecrosis, vascular permeability and platelet aggregation. The sequence is that of Dermonecrotic toxin LiSicTox-alphaIA1bii from Loxosceles intermedia (Brown spider).